The sequence spans 664 residues: Acetylcholinesterase (664 aa).

Positions 1–29 are cleaved as a signal peptide; that stretch reads MFVNQRTRRPYMSVFVLVLGAAVICPAYG. A disulfide bridge connects residues cysteine 95 and cysteine 122. The N-linked (GlcNAc...) asparagine glycan is linked to asparagine 117. Catalysis depends on serine 261, which acts as the Acyl-ester intermediate. Residues cysteine 315 and cysteine 330 are joined by a disulfide bond. Asparagine 316 carries an N-linked (GlcNAc...) asparagine glycan. Catalysis depends on charge relay system residues glutamate 390 and histidine 504. Cysteine 466 and cysteine 588 are oxidised to a cystine. Asparagine 517 carries an N-linked (GlcNAc...) asparagine glycan. Asparagine 647 carries GPI-anchor amidated asparagine lipidation. Residues 648-664 constitute a propeptide, removed in mature form; that stretch reads KTPPHPQVILETRAFMH.

Belongs to the type-B carboxylesterase/lipase family. Homodimer; disulfide-linked.

The protein localises to the synapse. It localises to the cell membrane. The catalysed reaction is acetylcholine + H2O = choline + acetate + H(+). In terms of biological role, rapidly hydrolyzes choline released into the synapse. It can hydrolyze butyrylthiocholine. This chain is Acetylcholinesterase, found in Anopheles stephensi (Indo-Pakistan malaria mosquito).